A 658-amino-acid polypeptide reads, in one-letter code: Carnitine O-palmitoyltransferase 2, mitochondrial (658 aa).

The transit peptide at 1–26 (MARLLTSSSALRWGAVSSSQSVGRAY) directs the protein to the mitochondrion. Topologically, residues 27–179 (SSGSPDTEYV…GYLEPEIFHL (153 aa)) are mitochondrial matrix. An intramembrane region (note=Mitochondrial inner membrane) is located at residues 180 to 209 (NPAKSDTLTFRKLIRFVPSSLSWYGAYMVN). The Mitochondrial matrix portion of the chain corresponds to 210–658 (AYPLDMSQYF…FTVLQDKPIK (449 aa)). The Proton acceptor role is filled by H373. A CoA-binding site is contributed by 453-465 (GKELLKTQKLSPD). Residues Y487, S489, and T500 each coordinate (R)-carnitine.

It belongs to the carnitine/choline acetyltransferase family.

Its subcellular location is the mitochondrion inner membrane. It catalyses the reaction (R)-carnitine + hexadecanoyl-CoA = O-hexadecanoyl-(R)-carnitine + CoA. The enzyme catalyses octanoyl-CoA + (R)-carnitine = O-octanoyl-(R)-carnitine + CoA. It carries out the reaction decanoyl-CoA + (R)-carnitine = O-decanoyl-(R)-carnitine + CoA. The catalysed reaction is dodecanoyl-CoA + (R)-carnitine = O-dodecanoyl-R-carnitine + CoA. It catalyses the reaction tetradecanoyl-CoA + (R)-carnitine = O-tetradecanoyl-(R)-carnitine + CoA. The enzyme catalyses (R)-carnitine + octadecanoyl-CoA = O-octadecanoyl-(R)-carnitine + CoA. It carries out the reaction eicosanoyl-CoA + (R)-carnitine = O-eicosanoyl-(R)-carnitine + CoA. The catalysed reaction is (9Z)-tetradecenoyl-CoA + (R)-carnitine = O-(9Z)-tetradecenoyl-(R)-carnitine + CoA. It catalyses the reaction (5Z)-tetradecenoyl-CoA + (R)-carnitine = O-(5Z)-tetradecenoyl-(R)-carnitine + CoA. The enzyme catalyses (R)-carnitine + (9Z)-octadecenoyl-CoA = O-(9Z)-octadecenoyl-(R)-carnitine + CoA. It carries out the reaction 4,8-dimethylnonanoyl-CoA + (R)-carnitine = O-4,8-dimethylnonanoyl-(R)-carnitine + CoA. Its pathway is lipid metabolism; fatty acid beta-oxidation. Its function is as follows. Involved in the intramitochondrial synthesis of acylcarnitines from accumulated acyl-CoA metabolites. Reconverts acylcarnitines back into the respective acyl-CoA esters that can then undergo beta-oxidation, an essential step for the mitochondrial uptake of long-chain fatty acids and their subsequent beta-oxidation in the mitochondrion. Active with medium (C8-C12) and long-chain (C14-C18) acyl-CoA esters. This chain is Carnitine O-palmitoyltransferase 2, mitochondrial (cpt2), found in Xenopus tropicalis (Western clawed frog).